We begin with the raw amino-acid sequence, 446 residues long: Tol-Pal system protein TolB (446 aa).

A signal peptide spans 1 to 19 (MLLRYLFILFIIIPIKAFA).

This sequence belongs to the TolB family. As to quaternary structure, the Tol-Pal system is composed of five core proteins: the inner membrane proteins TolA, TolQ and TolR, the periplasmic protein TolB and the outer membrane protein Pal. They form a network linking the inner and outer membranes and the peptidoglycan layer.

The protein localises to the periplasm. In terms of biological role, part of the Tol-Pal system, which plays a role in outer membrane invagination during cell division and is important for maintaining outer membrane integrity. This chain is Tol-Pal system protein TolB, found in Pelagibacter ubique (strain HTCC1062).